A 99-amino-acid chain; its full sequence is uncharacterized protein (99 aa).

A helical transmembrane segment spans residues 6–26 (LVCSIVFILFILFYDLKIGTI). The region spanning 48-95 (KTVKVKPGDTVMSIVGSAGSPDDIVKDFEALNPNVKANAIQAGTAYKF) is the LysM domain.

Its subcellular location is the secreted. It localises to the cell wall. The protein localises to the membrane. This is an uncharacterized protein from Bacillus subtilis (strain 168).